The chain runs to 146 residues: Large ribosomal subunit protein uL13 (146 aa).

The protein belongs to the universal ribosomal protein uL13 family. Part of the 50S ribosomal subunit.

In terms of biological role, this protein is one of the early assembly proteins of the 50S ribosomal subunit, although it is not seen to bind rRNA by itself. It is important during the early stages of 50S assembly. The protein is Large ribosomal subunit protein uL13 of Borreliella burgdorferi (strain ATCC 35210 / DSM 4680 / CIP 102532 / B31) (Borrelia burgdorferi).